We begin with the raw amino-acid sequence, 88 residues long: MKFLLLFLVVLPIMGVLGKKNGYAVDSSGKAPECLLSNYCYNECTKVHYADKGYCCLLSCYCFGLNDDKKVLEISDTRKSYCDTPIIN.

Positions 1-18 (MKFLLLFLVVLPIMGVLG) are cleaved as a signal peptide. One can recognise an LCN-type CS-alpha/beta domain in the interval 20 to 83 (KNGYAVDSSG…ISDTRKSYCD (64 aa)). Intrachain disulfides connect Cys34-Cys55, Cys40-Cys60, Cys44-Cys62, and Cys56-Cys82.

The protein belongs to the long (4 C-C) scorpion toxin superfamily. Sodium channel inhibitor family. Beta subfamily. As to expression, expressed by the venom gland.

The protein localises to the secreted. Its function is as follows. Excitatory insect beta-toxins induce a spastic paralysis. They bind voltage-independently at site-4 of sodium channels (Nav) and shift the voltage of activation toward more negative potentials thereby affecting sodium channel activation and promoting spontaneous and repetitive firing. This toxin is active only on insects. This chain is Beta-insect excitatory toxin 2, found in Androctonus australis (Sahara scorpion).